The primary structure comprises 647 residues: Macrolide export ATP-binding/permease protein MacB 2 (647 aa).

The ABC transporter domain occupies 6 to 244; sequence IQLKGIERRY…VTPTAAPAGK (239 aa). Residue 42 to 49 participates in ATP binding; it reads GASGSGKS. Positions 223–247 are disordered; that stretch reads QEDSGRKPAAVPVTPTAAPAGKEGV. Residues 230–242 show a composition bias toward low complexity; the sequence is PAAVPVTPTAAPA. 4 consecutive transmembrane segments (helical) span residues 273-293, 527-547, 581-601, and 610-630; these read FLTM…VALG, IAVI…LVSV, LGGM…SLFV, and LFSI…FGYL.

It belongs to the ABC transporter superfamily. Macrolide exporter (TC 3.A.1.122) family. In terms of assembly, homodimer. Part of the tripartite efflux system MacAB-TolC, which is composed of an inner membrane transporter, MacB, a periplasmic membrane fusion protein, MacA, and an outer membrane component, TolC. The complex forms a large protein conduit and can translocate molecules across both the inner and outer membranes. Interacts with MacA.

The protein resides in the cell inner membrane. Its function is as follows. Part of the tripartite efflux system MacAB-TolC. MacB is a non-canonical ABC transporter that contains transmembrane domains (TMD), which form a pore in the inner membrane, and an ATP-binding domain (NBD), which is responsible for energy generation. Confers resistance against macrolides. The sequence is that of Macrolide export ATP-binding/permease protein MacB 2 from Aeromonas hydrophila subsp. hydrophila (strain ATCC 7966 / DSM 30187 / BCRC 13018 / CCUG 14551 / JCM 1027 / KCTC 2358 / NCIMB 9240 / NCTC 8049).